Here is a 486-residue protein sequence, read N- to C-terminus: MEKLQILTERQQTELNHAIIQYLQPLCQQDNHVLLDQLSKLLNIDQSTQESNNVEKVDNYLEKRWSTVLRLQKKIIDLENEISNLNNIINSTNSDNNGIILSKDKINWIPKGAVKQSYQCENIVTTVKLHPNLPLVLNGCNDGNLYIWNISNDDNTIPEKMIKAHTRAINKICFTYKKPYYLATCSSDLTIKIWDEKFNHIRTLNGHEHTVSSIQFSPVDNSILYSVSRDKNIRVWDIFQGISLKSFVGHSEWCRDLDIISSDTYGDFVLTCSNDQSARLSHANSGAGVAMIVGHSHVVETVKFLPSLQANKILDEYITKNTEQFPTIPLELLKDKTYNQLGFKYCITASRDNTIKLWLIPPPTIAPHRPPLPSKYNNSQSWLIAELKGHSSWVKSLCVHPNGKFIISGSDDKTIKFWDLSGLLETGYVNVVKTIIGHDGFINDIDFARLKEASDVSEEDLLKQVEKRMRCLFISGSADNSIKLWN.

Residues 66 to 99 (STVLRLQKKIIDLENEISNLNNIINSTNSDNNGI) adopt a coiled-coil conformation. WD repeat units follow at residues 119-158 (QCEN…NTIP), 164-205 (AHTR…RTLN), 206-246 (GHEH…SLKS), 249-291 (GHSE…GVAM), 294-328 (GHSH…FPTI), 329-368 (PLEL…IAPH), 389-428 (GHSS…ETGY), and 437-483 (GHDG…NSIK).

The protein belongs to the WD repeat LIS1/nudF family. In terms of assembly, self-associates. Interacts with NDL1 and dynein.

The protein resides in the cytoplasm. The protein localises to the cytoskeleton. It localises to the spindle pole. Its function is as follows. Positively regulates the activity of the minus-end directed microtubule motor protein dynein. Plays a central role in positioning the mitotic spindle at the bud neck during cell division. Targets cytoplasmic dynein to microtubule plus ends, thereby promoting dynein-mediated microtubule sliding along the bud cortex and consequently the movement of the mitotic spindle to the bud neck. This is Nuclear distribution protein PAC1 from Candida albicans (strain SC5314 / ATCC MYA-2876) (Yeast).